The following is a 185-amino-acid chain: Casparian strip membrane protein 2 (185 aa).

The Cytoplasmic segment spans residues 1-25 (MKAVSIEAGEGSKAKRVHGVNRGIS). The helical transmembrane segment at 26–46 (VFDLVLRIVALVGTLASAVAM) threads the bilayer. Topologically, residues 47–73 (GTADQALSFSTQIVNFEAQYDDIDAFK) are extracellular. A helical membrane pass occupies residues 74-94 (FFVVSNSITCVYLALSIPISI). The Cytoplasmic portion of the chain corresponds to 95-106 (FHIIRSRAGKSR). The helical transmembrane segment at 107–127 (VLLIVLDAIMLVFLTSGASAA) threads the bilayer. The Extracellular portion of the chain corresponds to 128–160 (AAIVYLAHNGNTSTNWFSICQQYTDFCQRSAGS). N-linked (GlcNAc...) asparagine glycosylation is present at asparagine 138. Residues 161-181 (LIGSFGAMALMVLLIILSSIA) traverse the membrane as a helical segment. The Cytoplasmic portion of the chain corresponds to 182–185 (LSRR).

Belongs to the Casparian strip membrane proteins (CASP) family. As to quaternary structure, homodimer and heterodimers.

The protein resides in the cell membrane. In terms of biological role, regulates membrane-cell wall junctions and localized cell wall deposition. Required for establishment of the Casparian strip membrane domain (CSD) and the subsequent formation of Casparian strips, a cell wall modification of the root endodermis that determines an apoplastic barrier between the intraorganismal apoplasm and the extraorganismal apoplasm and prevents lateral diffusion. The polypeptide is Casparian strip membrane protein 2 (Solanum demissum (Wild potato)).